The chain runs to 360 residues: DNA integrity scanning protein DisA (360 aa).

In terms of domain architecture, DAC spans E11 to I149. ATP contacts are provided by residues G78, L96, and M109–T113.

Belongs to the DisA family. As to quaternary structure, homooligomer. Interacts with RadA. It depends on Mg(2+) as a cofactor.

The protein resides in the cytoplasm. It catalyses the reaction 2 ATP = 3',3'-c-di-AMP + 2 diphosphate. With respect to regulation, diadenylate cyclase (DAC) activity is inhibited 2-fold by Holliday junction (HJ) DNA, further addition of RecG inhibits DAC activity 11-fold; RecG may relocate DisA from the HJ. DAC is inhibited by the interaction with RadA. Diadenylate cyclase activity is not affected by ssDNA or dsDNA, but three- and four-way junctions strongly inhibit the activity of DisA, suggesting the enzyme is regulated by branched nucleic acids. Its function is as follows. Participates in a DNA-damage check-point that is active prior to asymmetric division when DNA is damaged. Forms globular foci that rapidly scan along the chromosomes during sporulation, searching for lesions. Its ability to scan through the chromosome rapidly is due to its non-specific DNA-binding. When a lesion is present, DisA pauses at the lesion site. This triggers a cellular response that culminates in a temporary block in sporulation initiation. It is required, at least partially, to inhibit the activity of the transcription factor spo0A, which controls, among others, early sporulation genes. In B.subtilis c-di-AMP is a second messenger that mediates growth, DNA repair and cell wall homeostasis; it is toxic when present in excess. Limits the replication fork reggression activity of RecG; DisA inhibits the ATPase activity of RecG. By limiting RecG-mediated fork regression, DisA provides time for removal of potentially lethal DNA lesions. In terms of biological role, one of 3 paralogous diadenylate cyclases (DAC) in this bacteria. Has diadenylate cyclase activity, catalyzing the condensation of 2 ATP molecules into cyclic di-AMP (c-di-AMP). c-di-AMP acts as a signaling molecule that couples DNA integrity with progression of sporulation. The rise in c-di-AMP level generated by DisA while scanning the chromosome operates as a positive signal that advances sporulation; upon encountering a lesion, the DisA focus arrests at the damaged site and halts c-di-AMP synthesis. Does not convert GTP to c-di-GMP. This Bacillus subtilis (strain 168) protein is DNA integrity scanning protein DisA.